The primary structure comprises 329 residues: GMP reductase (329 aa).

The active-site Thioimidate intermediate is the C178. V207–V230 provides a ligand contact to NADP(+).

The protein belongs to the IMPDH/GMPR family. GuaC type 2 subfamily.

The enzyme catalyses IMP + NH4(+) + NADP(+) = GMP + NADPH + 2 H(+). Catalyzes the irreversible NADPH-dependent deamination of GMP to IMP. It functions in the conversion of nucleobase, nucleoside and nucleotide derivatives of G to A nucleotides, and in maintaining the intracellular balance of A and G nucleotides. This is GMP reductase from Lactococcus lactis subsp. cremoris (strain SK11).